The primary structure comprises 827 residues: WD repeat-containing protein 27 (827 aa).

14 WD repeats span residues asparagine 3–threonine 57, histidine 62–leucine 101, leucine 112–isoleucine 151, alanine 155–histidine 194, tyrosine 201–leucine 237, phenylalanine 292–leucine 337, tyrosine 344–isoleucine 387, lysine 502–alanine 542, glycine 546–alanine 584, alanine 590–isoleucine 629, lysine 646–leucine 687, glutamate 698–leucine 740, glutamate 746–methionine 784, and threonine 788–alanine 826.

This chain is WD repeat-containing protein 27 (WDR27), found in Homo sapiens (Human).